The following is a 477-amino-acid chain: Cysteine--tRNA ligase (477 aa).

C28 provides a ligand contact to Zn(2+). Positions 30–40 (PTVYDYAHIGN) match the 'HIGH' region motif. C213, H238, and E242 together coordinate Zn(2+). The 'KMSKS' region signature appears at 270–274 (KMSKS). K273 is an ATP binding site.

This sequence belongs to the class-I aminoacyl-tRNA synthetase family. Monomer. Zn(2+) serves as cofactor.

It is found in the cytoplasm. It carries out the reaction tRNA(Cys) + L-cysteine + ATP = L-cysteinyl-tRNA(Cys) + AMP + diphosphate. This is Cysteine--tRNA ligase from Chlamydia trachomatis serovar A (strain ATCC VR-571B / DSM 19440 / HAR-13).